The primary structure comprises 421 residues: UDP-N-acetylglucosamine 1-carboxyvinyltransferase 1 (421 aa).

22–23 (KN) provides a ligand contact to phosphoenolpyruvate. Arg94 contributes to the UDP-N-acetyl-alpha-D-glucosamine binding site. The active-site Proton donor is the Cys118. 2-(S-cysteinyl)pyruvic acid O-phosphothioketal is present on Cys118. Residues 123-127 (RPIEL), Asp310, and Val332 contribute to the UDP-N-acetyl-alpha-D-glucosamine site.

The protein belongs to the EPSP synthase family. MurA subfamily.

The protein resides in the cytoplasm. It catalyses the reaction phosphoenolpyruvate + UDP-N-acetyl-alpha-D-glucosamine = UDP-N-acetyl-3-O-(1-carboxyvinyl)-alpha-D-glucosamine + phosphate. Its pathway is cell wall biogenesis; peptidoglycan biosynthesis. Its function is as follows. Cell wall formation. Adds enolpyruvyl to UDP-N-acetylglucosamine. In Clostridium perfringens (strain 13 / Type A), this protein is UDP-N-acetylglucosamine 1-carboxyvinyltransferase 1.